The primary structure comprises 311 residues: Catabolite control protein B (311 aa).

The region spanning 1 to 56 (MANIKEIARLANVSVSTVSRVLNHHPYVSEEKRKLVHQVMKELDYTPNRTAIDLIR) is the HTH lacI-type domain. The H-T-H motif DNA-binding region spans 4–23 (IKEIARLANVSVSTVSRVLN).

As to quaternary structure, seems to be complexed to phosphorylated HPr.

Functionally, transcriptional regulator involved in catabolite repression of several operons. The chain is Catabolite control protein B (ccpB) from Bacillus subtilis (strain 168).